A 398-amino-acid chain; its full sequence is Tryptophan synthase beta chain (398 aa).

K88 is modified (N6-(pyridoxal phosphate)lysine).

This sequence belongs to the TrpB family. In terms of assembly, tetramer of two alpha and two beta chains. It depends on pyridoxal 5'-phosphate as a cofactor.

The enzyme catalyses (1S,2R)-1-C-(indol-3-yl)glycerol 3-phosphate + L-serine = D-glyceraldehyde 3-phosphate + L-tryptophan + H2O. It functions in the pathway amino-acid biosynthesis; L-tryptophan biosynthesis; L-tryptophan from chorismate: step 5/5. In terms of biological role, the beta subunit is responsible for the synthesis of L-tryptophan from indole and L-serine. The polypeptide is Tryptophan synthase beta chain (Histophilus somni (strain 2336) (Haemophilus somnus)).